The sequence spans 511 residues: Zinc finger and BTB domain-containing protein 45 (511 aa).

A BTB domain is found at 33–96 (CDVTVRIREA…LYSGSLVVAQ (64 aa)). Residues 159-168 (ARPPGHPGAA) are compositionally biased toward low complexity. 2 disordered regions span residues 159–241 (ARPP…PDCA) and 294–403 (EDGA…PPTY). Acidic residues predominate over residues 206–224 (RGDEDDEESDDETDGEDGE). Over residues 339–360 (PGPPAPPPSAPSGPAPAPPPAF) the composition is skewed to pro residues. Positions 378 to 397 (PAPSAAPTTAPSGTPARTPG) are enriched in low complexity. 4 consecutive C2H2-type zinc fingers follow at residues 403 to 425 (YECSHCRKTFSSRKNYTKHMFIH), 431 to 453 (HQCAVCWRSFSLRDYLLKHMVTH), 459 to 481 (FQCAVCAKRFTQKSSLNVHMRTH), and 486 to 508 (APCPACGKVFSHRALLERHLAAH).

The protein belongs to the krueppel C2H2-type zinc-finger protein family.

Its subcellular location is the nucleus. In terms of biological role, may be involved in transcriptional regulation. In the central nervous system, may play a role in glial cell differentiation. The sequence is that of Zinc finger and BTB domain-containing protein 45 (ZBTB45) from Homo sapiens (Human).